The following is a 578-amino-acid chain: Phosphoenolpyruvate-protein phosphotransferase (578 aa).

H195 functions as the Tele-phosphohistidine intermediate in the catalytic mechanism. Phosphoenolpyruvate-binding residues include R302 and R338. Mg(2+)-binding residues include E437 and D461. Phosphoenolpyruvate-binding positions include 460–461 and R471; that span reads ND. Residue C508 is the Proton donor of the active site.

The protein belongs to the PEP-utilizing enzyme family. As to quaternary structure, homodimer. The cofactor is Mg(2+).

The protein resides in the cytoplasm. It catalyses the reaction L-histidyl-[protein] + phosphoenolpyruvate = N(pros)-phospho-L-histidyl-[protein] + pyruvate. Functionally, general (non sugar-specific) component of the phosphoenolpyruvate-dependent sugar phosphotransferase system (sugar PTS). This major carbohydrate active-transport system catalyzes the phosphorylation of incoming sugar substrates concomitantly with their translocation across the cell membrane. Enzyme I transfers the phosphoryl group from phosphoenolpyruvate (PEP) to the phosphoryl carrier protein (HPr). The chain is Phosphoenolpyruvate-protein phosphotransferase (ptsI) from Geobacillus stearothermophilus (Bacillus stearothermophilus).